Reading from the N-terminus, the 443-residue chain is Glutamate--tRNA ligase 2 (443 aa).

Positions 7–17 match the 'HIGH' region motif; sequence PSPTGYLHVGN. The short motif at 236–240 is the 'KMSKS' region element; the sequence is KISKR. Lysine 239 lines the ATP pocket.

Belongs to the class-I aminoacyl-tRNA synthetase family. Glutamate--tRNA ligase type 1 subfamily. In terms of assembly, monomer.

It localises to the cytoplasm. It carries out the reaction tRNA(Glu) + L-glutamate + ATP = L-glutamyl-tRNA(Glu) + AMP + diphosphate. Functionally, catalyzes the attachment of glutamate to tRNA(Glu) in a two-step reaction: glutamate is first activated by ATP to form Glu-AMP and then transferred to the acceptor end of tRNA(Glu). In Ehrlichia canis (strain Jake), this protein is Glutamate--tRNA ligase 2.